A 391-amino-acid chain; its full sequence is F-box protein At2g34280 (391 aa).

The F-box domain maps to 1-43 (MDLLPYDVVEHILERLDVKSLLNCKSVSKQWRSTIRCRAFQER).

The sequence is that of F-box protein At2g34280 from Arabidopsis thaliana (Mouse-ear cress).